Here is a 518-residue protein sequence, read N- to C-terminus: PTS system mannitol-specific EIICB component (518 aa).

Residues 1–31 (MDTMSNSQQNKGIGRKVQAFGSFLSSMIMPN) are Cytoplasmic-facing. The region spanning 20 to 352 (FGSFLSSMIM…LKFTKDPKQD (333 aa)) is the PTS EIIC type-2 domain. A helical transmembrane segment spans residues 32–53 (IGAFIAWGFIAAIFIDNGWFPN). At 54–57 (KDLA) the chain is on the extracellular side. A helical transmembrane segment spans residues 58-78 (QLAGPMITYLIPLLIAFSGGR). Residues 79–142 (LIHDLRGGII…QGFEMLFNNF (64 aa)) lie on the Cytoplasmic side of the membrane. A helical transmembrane segment spans residues 143 to 164 (SAGILGFIMTIFGFEVLAPIMK). At 165–173 (FIMHILSVG) the chain is on the extracellular side. The helical transmembrane segment at 174-194 (VEALVHAHLLPLVSILVEPAK) threads the bilayer. Topologically, residues 195–281 (IVFLNNAINH…VLMRPLLFVS (87 aa)) are cytoplasmic. Residues 282–301 (VILGGMTGVATYSLLDFGFK) traverse the membrane as a helical segment. The Extracellular segment spans residues 302–321 (TPASPGSIIVYAINAPKGEF). Residues 322–343 (LHMLTGVVLAALVSFVVSALIL) form a helical membrane-spanning segment. Residues 344 to 518 (KFTKDPKQDL…LINNLKEDQD (175 aa)) are Cytoplasmic-facing. A disordered region spans residues 369–406 (SVASKLSAKDDNKAADNKTAETTTATAASNKAEDKDSD). A compositionally biased stretch (basic and acidic residues) spans 375–387 (SAKDDNKAADNKT). Over residues 388 to 398 (AETTTATAASN) the composition is skewed to low complexity. Residues 426–518 (DHVIFACDAG…LINNLKEDQD (93 aa)) form the PTS EIIB type-2 domain. Residue cysteine 432 is the Phosphocysteine intermediate of the active site. Phosphocysteine; by EIIA is present on cysteine 432.

As to quaternary structure, homodimer.

It is found in the cell membrane. It catalyses the reaction D-mannitol(out) + N(pros)-phospho-L-histidyl-[protein] = D-mannitol 1-phosphate(in) + L-histidyl-[protein]. The phosphoenolpyruvate-dependent sugar phosphotransferase system (sugar PTS), a major carbohydrate active transport system, catalyzes the phosphorylation of incoming sugar substrates concomitantly with their translocation across the cell membrane. The enzyme II CmtAB PTS system is involved in D-mannitol transport. The sequence is that of PTS system mannitol-specific EIICB component from Staphylococcus carnosus.